We begin with the raw amino-acid sequence, 61 residues long: uncharacterized protein (61 aa).

2 consecutive transmembrane segments (helical) span residues 5–25 (MLYFLIYFAVTHLPSLISLLL) and 29–49 (YILTLLFIVLHILFIWLPWYT).

Its subcellular location is the membrane. This is an uncharacterized protein from Saccharomyces cerevisiae (strain ATCC 204508 / S288c) (Baker's yeast).